A 468-amino-acid chain; its full sequence is Efflux pump azaK (468 aa).

The interval 1-30 (MTVHPPAVADETSPLLPSQDGPGHNGIVPA) is disordered. 6 consecutive transmembrane segments (helical) span residues 43-65 (QVAL…FPFV), 80-100 (VGFY…MLMI), 112-132 (KPVL…FGFS), 135-155 (LGQM…VVTV), 174-194 (YFSL…GALC), and 207-227 (LPTV…LMFV). A glycan (N-linked (GlcNAc...) asparagine) is linked at Asn228. 6 consecutive transmembrane segments (helical) span residues 257 to 277 (VLPV…YTAV), 296 to 316 (FYIS…LVLV), 329 to 349 (ILRG…GASV), 357 to 377 (VAFW…AMQL), 387 to 407 (VSPS…IISF), and 429 to 449 (PGFY…AFTL).

It belongs to the major facilitator superfamily.

It is found in the cell membrane. Its function is as follows. Efflux pump that might be required for efficient secretion of azaphilones. This Aspergillus niger (strain ATCC 1015 / CBS 113.46 / FGSC A1144 / LSHB Ac4 / NCTC 3858a / NRRL 328 / USDA 3528.7) protein is Efflux pump azaK.